A 171-amino-acid polypeptide reads, in one-letter code: Spiderine-2b (171 aa).

The N-terminal stretch at 1-18 (MKFALVLLGFCAFYLVNA) is a signal peptide. A propeptide spans 19–58 (TGDLETELEASDLQELQEALDLIAETPLESLEAEELEEAR) (removed in mature form). The interval 59 to 104 (KFKFPKINWGKLASKAKDVYKKGQKLAKNKNVKKALKYGKQLAENL) is linear cationic cytotoxin domain. Residues 118–171 (NNKCWAIGTRCTDDCDCCPEHHCHCPAKSWTFGLIPCSCQVTESDKVNKCPPAE) form the Oxytoxin-type inhibitor cystine knot (ICK) domain. 5 cysteine pairs are disulfide-bonded: cysteine 121-cysteine 135, cysteine 128-cysteine 140, cysteine 132-cysteine 167, cysteine 134-cysteine 156, and cysteine 142-cysteine 154.

It belongs to the spiderine family. Cationic/spiderine subfamily. As to expression, expressed by the venom gland.

Its subcellular location is the secreted. Has antimicrobial, insecticidal, cytolytic and cytotoxic activity. The protein is Spiderine-2b of Oxyopes takobius (Lynx spider).